The chain runs to 207 residues: Uridine kinase (207 aa).

13–20 (GASGSGKT) contacts ATP.

It belongs to the uridine kinase family.

Its subcellular location is the cytoplasm. The catalysed reaction is uridine + ATP = UMP + ADP + H(+). The enzyme catalyses cytidine + ATP = CMP + ADP + H(+). It participates in pyrimidine metabolism; CTP biosynthesis via salvage pathway; CTP from cytidine: step 1/3. It functions in the pathway pyrimidine metabolism; UMP biosynthesis via salvage pathway; UMP from uridine: step 1/1. In Ureaplasma urealyticum serovar 10 (strain ATCC 33699 / Western), this protein is Uridine kinase.